Reading from the N-terminus, the 174-residue chain is Peptide deformylase (174 aa).

Residues Cys96 and His138 each contribute to the Fe cation site. The active site involves Glu139. His142 provides a ligand contact to Fe cation.

Belongs to the polypeptide deformylase family. Fe(2+) serves as cofactor.

It carries out the reaction N-terminal N-formyl-L-methionyl-[peptide] + H2O = N-terminal L-methionyl-[peptide] + formate. Functionally, removes the formyl group from the N-terminal Met of newly synthesized proteins. Requires at least a dipeptide for an efficient rate of reaction. N-terminal L-methionine is a prerequisite for activity but the enzyme has broad specificity at other positions. The polypeptide is Peptide deformylase (Helicobacter pylori (strain G27)).